The chain runs to 177 residues: MMNSCTPNKKSSYSYEDLLASGRGELFGEDGPQLPAPTMLMMDRIVEMNETGGQFNKGYIEAELDIKPDLPFFGCHFIGDPVMPGCLGLDAMWQLVGFYLGWIGGKGKGRALGVGEVKFTGQILPSAKKVVYRIHMKRVINRKLVMGMADGEVEVDGRVIYTATDLKVGLFQDTSAF.

His-76 is an active-site residue.

This sequence belongs to the thioester dehydratase family. FabA subfamily. Homodimer.

It localises to the cytoplasm. It catalyses the reaction a (3R)-hydroxyacyl-[ACP] = a (2E)-enoyl-[ACP] + H2O. The catalysed reaction is (3R)-hydroxydecanoyl-[ACP] = (2E)-decenoyl-[ACP] + H2O. The enzyme catalyses (2E)-decenoyl-[ACP] = (3Z)-decenoyl-[ACP]. It functions in the pathway lipid metabolism; fatty acid biosynthesis. Necessary for the introduction of cis unsaturation into fatty acids. Catalyzes the dehydration of (3R)-3-hydroxydecanoyl-ACP to E-(2)-decenoyl-ACP and then its isomerization to Z-(3)-decenoyl-ACP. Can catalyze the dehydratase reaction for beta-hydroxyacyl-ACPs with saturated chain lengths up to 16:0, being most active on intermediate chain length. The chain is 3-hydroxydecanoyl-[acyl-carrier-protein] dehydratase (fabA) from Pasteurella multocida (strain Pm70).